The chain runs to 310 residues: Ribosomal protein uL3 glutamine methyltransferase (310 aa).

The protein belongs to the protein N5-glutamine methyltransferase family. PrmB subfamily.

The enzyme catalyses L-glutaminyl-[ribosomal protein uL3] + S-adenosyl-L-methionine = N(5)-methyl-L-glutaminyl-[ribosomal protein uL3] + S-adenosyl-L-homocysteine + H(+). Its function is as follows. Methylates large ribosomal subunit protein uL3 on a specific glutamine residue. The polypeptide is Ribosomal protein uL3 glutamine methyltransferase (Aliivibrio fischeri (strain ATCC 700601 / ES114) (Vibrio fischeri)).